A 342-amino-acid polypeptide reads, in one-letter code: Fatty acid desaturase 6 (342 aa).

The next 2 membrane-spanning stretches (helical) occupy residues G39–L59 and S63–V83. The Histidine box-1 signature appears at H87 to H91. Residues H124–H128 carry the Histidine box-2 motif. A run of 2 helical transmembrane segments spans residues Y151 to E171 and L185 to F205. The Histidine box-3 motif lies at H277–H281.

The protein belongs to the fatty acid desaturase type 1 family.

It localises to the membrane. Its pathway is lipid metabolism; fatty acid metabolism. This is Fatty acid desaturase 6 (FADS6) from Bos taurus (Bovine).